The sequence spans 322 residues: tRNA dimethylallyltransferase (322 aa).

18 to 25 (GPTASGKS) serves as a coordination point for ATP. Residue 20 to 25 (TASGKS) participates in substrate binding. Interaction with substrate tRNA stretches follow at residues 43 to 46 (DSRQ) and 167 to 171 (QRLVR).

This sequence belongs to the IPP transferase family. As to quaternary structure, monomer. Mg(2+) is required as a cofactor.

The enzyme catalyses adenosine(37) in tRNA + dimethylallyl diphosphate = N(6)-dimethylallyladenosine(37) in tRNA + diphosphate. Its function is as follows. Catalyzes the transfer of a dimethylallyl group onto the adenine at position 37 in tRNAs that read codons beginning with uridine, leading to the formation of N6-(dimethylallyl)adenosine (i(6)A). In Chlorobium phaeobacteroides (strain BS1), this protein is tRNA dimethylallyltransferase.